We begin with the raw amino-acid sequence, 137 residues long: F420H(2)-dependent biliverdin reductase (137 aa).

Coenzyme F420-(gamma-Glu)n-binding positions include 36–41 (HVVAVG), 54–55 (IT), 60–61 (QK), arginine 67, and 78–81 (GARW).

It belongs to the F420H(2)-dependent biliverdin reductase family. As to quaternary structure, homodimer.

The protein resides in the cell surface. It localises to the secreted. It carries out the reaction (4Z,15Z)-bilirubin IXalpha + oxidized coenzyme F420-(gamma-L-Glu)(n) + H(+) = biliverdin IXalpha + reduced coenzyme F420-(gamma-L-Glu)(n). Functionally, catalyzes the F420H(2)-dependent reduction of biliverdin-IXalpha at C10 position, leading to bilirubin-IXalpha, a potent antioxidant. As biliverdin-IXalpha is produced in high amounts in macrophages infected with M.tuberculosis, its reduction by Rv2074 may play a role in protecting mycobacteria against oxidative stress, aiding the persistence of M.tuberculosis infection. The chain is F420H(2)-dependent biliverdin reductase from Mycobacterium tuberculosis (strain CDC 1551 / Oshkosh).